The following is a 336-amino-acid chain: Dihydroorotate dehydrogenase (quinone) (336 aa).

Residues 62–66 and T86 each bind FMN; that span reads AGLDK. Position 66 (K66) interacts with substrate. 111–115 serves as a coordination point for substrate; it reads NRMGF. N139 and N172 together coordinate FMN. Substrate is bound at residue N172. S175 acts as the Nucleophile in catalysis. Residue N177 participates in substrate binding. Positions 217 and 245 each coordinate FMN. Substrate is bound at residue 246-247; that stretch reads NT. FMN-binding positions include G268, G297, and 318–319; that span reads YS.

It belongs to the dihydroorotate dehydrogenase family. Type 2 subfamily. As to quaternary structure, monomer. FMN is required as a cofactor.

It localises to the cell membrane. It catalyses the reaction (S)-dihydroorotate + a quinone = orotate + a quinol. The protein operates within pyrimidine metabolism; UMP biosynthesis via de novo pathway; orotate from (S)-dihydroorotate (quinone route): step 1/1. Functionally, catalyzes the conversion of dihydroorotate to orotate with quinone as electron acceptor. In Salmonella agona (strain SL483), this protein is Dihydroorotate dehydrogenase (quinone).